The chain runs to 438 residues: uncharacterized protein (438 aa).

This is an uncharacterized protein from Encephalitozoon cuniculi (strain GB-M1) (Microsporidian parasite).